Consider the following 757-residue polypeptide: LPS-assembly protein LptD (757 aa).

The first 20 residues, 1–20 (MLQRFITSLMLLPFPGSALA), serve as a signal peptide directing secretion.

It belongs to the LptD family. Component of the lipopolysaccharide transport and assembly complex. Interacts with LptE and LptA.

Its subcellular location is the cell outer membrane. In terms of biological role, together with LptE, is involved in the assembly of lipopolysaccharide (LPS) at the surface of the outer membrane. The polypeptide is LPS-assembly protein LptD (Idiomarina loihiensis (strain ATCC BAA-735 / DSM 15497 / L2-TR)).